Here is a 335-residue protein sequence, read N- to C-terminus: MKAPVRVAVTGAAGQIGYALLFRIASGAMLGADQPVILQLLEIPDEKAQKALKGVMMELEDCAFPLLHSMIATGDPAVAFKDADVALLVGARPRGPGMERKDLLTANGQIFTVQGEAIGKYANPNVKVLVVGNPANTNAYIAMKSAMKHGRVKAKNFTAMLRLDHNRALSQLATKTGKPVASFKKVAVWGNHSPTMYPDVRFATADGAKVPELLKLGTAEGDAWNKDTFIPTVGKRGAAIIEARGLSSAASAASAAVDHIRDWWLGTNGEWVTMGIPSDGSYDIPEGIMYGFPVTCKNGEYEIVKGLEIDAFSREKMNNTLKELNEEKDAVASML.

Position 11-17 (11-17 (GAAGQIG)) interacts with NAD(+). Substrate contacts are provided by arginine 94 and arginine 100. NAD(+)-binding positions include asparagine 107, glutamine 114, and 131–133 (VGN). The substrate site is built by asparagine 133 and arginine 167. Residue histidine 192 is the Proton acceptor of the active site.

Belongs to the LDH/MDH superfamily. MDH type 2 family.

It catalyses the reaction (S)-malate + NAD(+) = oxaloacetate + NADH + H(+). In terms of biological role, catalyzes the reversible oxidation of malate to oxaloacetate. The chain is Malate dehydrogenase from Bdellovibrio bacteriovorus (strain ATCC 15356 / DSM 50701 / NCIMB 9529 / HD100).